Here is a 422-residue protein sequence, read N- to C-terminus: Enolase (422 aa).

Gln161 is a binding site for (2R)-2-phosphoglycerate. Glu203 serves as the catalytic Proton donor. Positions 240, 283, and 310 each coordinate Mg(2+). Residues Lys335, Arg364, Ser365, and Lys386 each contribute to the (2R)-2-phosphoglycerate site. Lys335 serves as the catalytic Proton acceptor.

This sequence belongs to the enolase family. The cofactor is Mg(2+).

The protein resides in the cytoplasm. It localises to the secreted. The protein localises to the cell surface. It catalyses the reaction (2R)-2-phosphoglycerate = phosphoenolpyruvate + H2O. Its pathway is carbohydrate degradation; glycolysis; pyruvate from D-glyceraldehyde 3-phosphate: step 4/5. Catalyzes the reversible conversion of 2-phosphoglycerate (2-PG) into phosphoenolpyruvate (PEP). It is essential for the degradation of carbohydrates via glycolysis. This chain is Enolase, found in Deinococcus radiodurans (strain ATCC 13939 / DSM 20539 / JCM 16871 / CCUG 27074 / LMG 4051 / NBRC 15346 / NCIMB 9279 / VKM B-1422 / R1).